The primary structure comprises 159 residues: Protein HydD (159 aa).

The protein belongs to the peptidase A31 family.

This is Protein HydD (hydD) from Wolinella succinogenes (strain ATCC 29543 / DSM 1740 / CCUG 13145 / JCM 31913 / LMG 7466 / NCTC 11488 / FDC 602W) (Vibrio succinogenes).